A 790-amino-acid chain; its full sequence is PAN2-PAN3 deadenylation complex subunit PAN3 (790 aa).

Disordered stretches follow at residues 166 to 191 (IAQQQPQHPQKQQQHPPSVGGGAVSA) and 235 to 259 (AMISGAGPGEKSPPHGMTPHGASPI). The segment covering 168–191 (QQQPQHPQKQQQHPPSVGGGAVSA) has biased composition (low complexity). The segment at 369-655 (DAAEAAQHAL…SVTDLMPMIG (287 aa)) is pseudokinase domain. ATP is bound by residues Arg423, 472–479 (DYHPGSQT), and 552–553 (TK). Positions 656–694 (ARFYTQLDALQSKIDMQEDELAKEMENGRLYRILVKLNS) form a coiled coil. The interval 695–790 (INERPDFNLD…FSELMSSAAN (96 aa)) is knob domain.

The protein belongs to the protein kinase superfamily. PAN3 family. In terms of assembly, homodimer. Forms a heterotrimer with a catalytic subunit PAN2 to form the poly(A)-nuclease (PAN) deadenylation complex. Interacts (via PAM-2 motif) with poly(A)-binding protein (via PABC domain), conferring substrate specificity of the enzyme complex. Interacts with the GW182 family protein gw. Interacts with Gyf.

It is found in the cytoplasm. Its subcellular location is the P-body. Regulatory subunit of the poly(A)-nuclease (PAN) deadenylation complex, one of two cytoplasmic mRNA deadenylases involved in general and miRNA-mediated mRNA turnover. PAN specifically shortens poly(A) tails of RNA and the activity is stimulated by poly(A)-binding protein (PABP). PAN deadenylation is followed by rapid degradation of the shortened mRNA tails by the CCR4-NOT complex. Deadenylated mRNAs are then degraded by two alternative mechanisms, namely exosome-mediated 3'-5' exonucleolytic degradation, or deadenylation-dependent mRNA decaping and subsequent 5'-3' exonucleolytic degradation by XRN1. PAN3 acts as a positive regulator for PAN activity, recruiting the catalytic subunit PAN2 to mRNA via its interaction with RNA and PABP, and to miRNA targets via its interaction with GW182 family proteins. This chain is PAN2-PAN3 deadenylation complex subunit PAN3, found in Drosophila melanogaster (Fruit fly).